We begin with the raw amino-acid sequence, 323 residues long: Phospho-N-acetylmuramoyl-pentapeptide-transferase (323 aa).

9 helical membrane passes run Ile-12 to Pro-32, Pro-58 to Gly-78, Ala-84 to Leu-104, Met-120 to Thr-140, Ile-151 to Ala-171, Gly-177 to Ser-197, Leu-200 to Leu-220, Val-229 to Leu-250, and Lys-303 to Leu-323.

This sequence belongs to the glycosyltransferase 4 family. MraY subfamily. It depends on Mg(2+) as a cofactor.

It is found in the cell membrane. The enzyme catalyses UDP-N-acetyl-alpha-D-muramoyl-L-alanyl-gamma-D-glutamyl-meso-2,6-diaminopimeloyl-D-alanyl-D-alanine + di-trans,octa-cis-undecaprenyl phosphate = di-trans,octa-cis-undecaprenyl diphospho-N-acetyl-alpha-D-muramoyl-L-alanyl-D-glutamyl-meso-2,6-diaminopimeloyl-D-alanyl-D-alanine + UMP. It functions in the pathway cell wall biogenesis; peptidoglycan biosynthesis. Catalyzes the initial step of the lipid cycle reactions in the biosynthesis of the cell wall peptidoglycan: transfers peptidoglycan precursor phospho-MurNAc-pentapeptide from UDP-MurNAc-pentapeptide onto the lipid carrier undecaprenyl phosphate, yielding undecaprenyl-pyrophosphoryl-MurNAc-pentapeptide, known as lipid I. The chain is Phospho-N-acetylmuramoyl-pentapeptide-transferase from Clostridium perfringens (strain ATCC 13124 / DSM 756 / JCM 1290 / NCIMB 6125 / NCTC 8237 / Type A).